The following is a 148-amino-acid chain: UPF0260 protein ECA2365 (148 aa).

Belongs to the UPF0260 family.

The sequence is that of UPF0260 protein ECA2365 from Pectobacterium atrosepticum (strain SCRI 1043 / ATCC BAA-672) (Erwinia carotovora subsp. atroseptica).